Consider the following 399-residue polypeptide: G2/mitotic-specific cyclin-B2 (399 aa).

The tract at residues 58–78 (PVKATKGPGKMTNTVVPPKPP) is disordered.

The protein belongs to the cyclin family. Cyclin AB subfamily. As to quaternary structure, interacts with the CDK1 protein kinase to form a serine/threonine kinase holoenzyme complex also known as maturation promoting factor (MPF). The cyclin subunit imparts substrate specificity to the complex.

Essential for the control of the cell cycle at the G2/M (mitosis) transition. The sequence is that of G2/mitotic-specific cyclin-B2 (CCNB2) from Gallus gallus (Chicken).